Reading from the N-terminus, the 177-residue chain is Bifunctional protein PyrR (177 aa).

Substrate is bound by residues 42-43 (SR), 104-112 (DDVLYTGRT), and Arg137. A PRPP-binding motif is present at residues 100–112 (VVIVDDVLYTGRT).

Belongs to the purine/pyrimidine phosphoribosyltransferase family. PyrR subfamily.

It catalyses the reaction UMP + diphosphate = 5-phospho-alpha-D-ribose 1-diphosphate + uracil. Regulates the transcription of the pyrimidine nucleotide (pyr) operon in response to exogenous pyrimidines. Functionally, also displays a weak uracil phosphoribosyltransferase activity which is not physiologically significant. The protein is Bifunctional protein PyrR of Fusobacterium nucleatum subsp. nucleatum (strain ATCC 25586 / DSM 15643 / BCRC 10681 / CIP 101130 / JCM 8532 / KCTC 2640 / LMG 13131 / VPI 4355).